Reading from the N-terminus, the 374-residue chain is Acetylxylan esterase (374 aa).

A signal peptide spans 1 to 22 (MVFSPRLSAFVALVALTNAATA). The CBM1 domain occupies 23-57 (VPMYGQCGGSGYTGPTQCDPGLVCVKLNDWYSQCQ). Positions 58–99 (SGGAQPPVTTTSSPPVTVSPPPSTTTVAPPVATGPPAPEIPA) are ser/Thr/Pro-rich linker. A disordered region spans residues 60–86 (GAQPPVTTTSSPPVTVSPPPSTTTVAP). Low complexity predominate over residues 63-73 (PPVTTTSSPPV). The segment at 100 to 374 (GQLTQLRSFG…EVVAMDFFGL (275 aa)) is catalytic. Asn-114 carries an N-linked (GlcNAc...) asparagine glycan. Ser-219 (charge relay system) is an active-site residue. N-linked (GlcNAc...) asparagine glycosylation is present at Asn-320.

Belongs to the carbohydrate esterase 1 (CE1) family. AxeA subfamily. Monomer. Post-translationally, glycosylated.

The protein localises to the secreted. It catalyses the reaction Deacetylation of xylans and xylo-oligosaccharides.. It functions in the pathway glycan degradation; xylan degradation. Its function is as follows. Acetylxylan esterase involved in the hydrolysis of xylan, a major structural heterogeneous polysaccharide found in plant biomass representing the second most abundant polysaccharide in the biosphere, after cellulose. Degrades acetylated xylans by cleaving acetyl side groups from the hetero-xylan backbone. This Coprinopsis cinerea (strain Okayama-7 / 130 / ATCC MYA-4618 / FGSC 9003) (Inky cap fungus) protein is Acetylxylan esterase.